We begin with the raw amino-acid sequence, 70 residues long: DNA-directed RNA polymerase subunit epsilon (70 aa).

Belongs to the RNA polymerase subunit epsilon family. In terms of assembly, RNAP is composed of a core of 2 alpha, a beta and a beta' subunit. The core is associated with a delta subunit, and at least one of epsilon or omega. When a sigma factor is associated with the core the holoenzyme is formed, which can initiate transcription.

It carries out the reaction RNA(n) + a ribonucleoside 5'-triphosphate = RNA(n+1) + diphosphate. Functionally, a non-essential component of RNA polymerase (RNAP). The chain is DNA-directed RNA polymerase subunit epsilon from Bacillus cytotoxicus (strain DSM 22905 / CIP 110041 / 391-98 / NVH 391-98).